The following is a 287-amino-acid chain: 4-diphosphocytidyl-2-C-methyl-D-erythritol kinase (287 aa).

The active site involves lysine 11. Position 93-103 (93-103) interacts with ATP; sequence PFGAGLGGGSS. Residue aspartate 135 is part of the active site.

Belongs to the GHMP kinase family. IspE subfamily.

The enzyme catalyses 4-CDP-2-C-methyl-D-erythritol + ATP = 4-CDP-2-C-methyl-D-erythritol 2-phosphate + ADP + H(+). Its pathway is isoprenoid biosynthesis; isopentenyl diphosphate biosynthesis via DXP pathway; isopentenyl diphosphate from 1-deoxy-D-xylulose 5-phosphate: step 3/6. Its function is as follows. Catalyzes the phosphorylation of the position 2 hydroxy group of 4-diphosphocytidyl-2C-methyl-D-erythritol. The protein is 4-diphosphocytidyl-2-C-methyl-D-erythritol kinase of Pelodictyon phaeoclathratiforme (strain DSM 5477 / BU-1).